The primary structure comprises 34 residues: Colipase (34 aa).

2 disulfides stabilise this stretch: Cys12–Cys23 and Cys18–Cys34.

The protein belongs to the colipase family. In terms of assembly, forms a 1:1 stoichiometric complex with pancreatic lipase. Expressed by the pancreas.

The protein resides in the secreted. Functionally, colipase is a cofactor of pancreatic lipase. It allows the lipase to anchor itself to the lipid-water interface. Without colipase the enzyme is washed off by bile salts, which have an inhibitory effect on the lipase. In Gallus gallus (Chicken), this protein is Colipase (CLPS).